The primary structure comprises 260 residues: Proliferating cell nuclear antigen (260 aa).

The DNA-binding element occupies 61–80; that stretch reads RCDRNLAMGVNLSSMSKILK. K164 participates in a covalent cross-link: Glycyl lysine isopeptide (Lys-Gly) (interchain with G-Cter in ubiquitin).

This sequence belongs to the PCNA family. Homotrimer. Forms a complex with activator 1 heteropentamer in the presence of ATP. Component of the replisome complex. Monoubiquitinated by the ube2b-rad18 complex on Lys-164. Monoubiquitination at Lys-164 also takes place in undamaged proliferating cells, and is mediated by the dcx(dtl) complex, leading to enhance PCNA-dependent translesion DNA synthesis.

It is found in the nucleus. This protein is an auxiliary protein of DNA polymerase delta and is involved in the control of eukaryotic DNA replication by increasing the polymerase's processibility during elongation of the leading strand. In Haplochromis burtoni (Burton's mouthbrooder), this protein is Proliferating cell nuclear antigen (pcna).